A 479-amino-acid chain; its full sequence is Integrator complex subunit 12 (479 aa).

Residues 57-140 (SKVSLPKMTK…SPIAFQTKDI (84 aa)) are disordered. Residues 70–90 (KSSSSSSASSSITTTSSSKSS) show a composition bias toward low complexity. Basic and acidic residues predominate over residues 91-128 (TSEKSKKESEKRTLEKIRVDPGEGVEPPKKPRLEKQDS). The PHD-type zinc-finger motif lies at 161 to 217 (GLACVVCRQMTVTSGNQLVECQECHNLYHQECHKPQVTDKDVNDPRLVWYCARCTRQ). Disordered stretches follow at residues 221 to 241 (MAQK…TTVP), 274 to 293 (TAAS…LPPG), and 305 to 479 (SNVG…KLKK). Composition is skewed to low complexity over residues 223–239 (QKTQ…LATT) and 280–289 (SSSSSSSSSS). Residues 305 to 328 (SNVGPSSTKLSTSQSGNSKTSPAA) are compositionally biased toward polar residues. The span at 354 to 364 (SSAGSGNGNNG) shows a compositional bias: gly residues. Low complexity predominate over residues 399-411 (GSLSPGAAPSSSL). Over residues 412–428 (GGNGGSGGNGAGNGGNS) the composition is skewed to gly residues. Over residues 429–451 (AGSSSSSGNNNNNGAKASADGKA) the composition is skewed to low complexity. Residues 466–479 (QMVKKKAAQKKLKK) show a composition bias toward basic residues.

This sequence belongs to the Integrator subunit 12 family. As to quaternary structure, component of the Integrator complex, composed of core subunits INTS1, INTS2, INTS3, INTS4, INTS5, INTS6, INTS7, INTS8, INTS9/RC74, INTS10, INTS11/CPSF3L, INTS12, INTS13, INTS14 and INTS15. The core complex associates with protein phosphatase 2A subunits PPP2CA and PPP2R1A, to form the Integrator-PP2A (INTAC) complex.

Its subcellular location is the nucleus. Component of the integrator complex, a multiprotein complex that terminates RNA polymerase II (Pol II) transcription in the promoter-proximal region of genes. The integrator complex provides a quality checkpoint during transcription elongation by driving premature transcription termination of transcripts that are unfavorably configured for transcriptional elongation: the complex terminates transcription by (1) catalyzing dephosphorylation of the C-terminal domain (CTD) of Pol II subunit POLR2A/RPB1 and SUPT5H/SPT5, (2) degrading the exiting nascent RNA transcript via endonuclease activity and (3) promoting the release of Pol II from bound DNA. The integrator complex is also involved in terminating the synthesis of non-coding Pol II transcripts, such as enhancer RNAs (eRNAs), small nuclear RNAs (snRNAs), telomerase RNAs and long non-coding RNAs (lncRNAs). The sequence is that of Integrator complex subunit 12 (ints12) from Danio rerio (Zebrafish).